We begin with the raw amino-acid sequence, 432 residues long: Trigger factor (432 aa).

A PPIase FKBP-type domain is found at G161–P246.

This sequence belongs to the FKBP-type PPIase family. Tig subfamily.

The protein localises to the cytoplasm. The enzyme catalyses [protein]-peptidylproline (omega=180) = [protein]-peptidylproline (omega=0). In terms of biological role, involved in protein export. Acts as a chaperone by maintaining the newly synthesized protein in an open conformation. Functions as a peptidyl-prolyl cis-trans isomerase. In Vibrio vulnificus (strain YJ016), this protein is Trigger factor.